The chain runs to 832 residues: Protein P (832 aa).

A terminal protein domain (TP) region spans residues 1–177; that stretch reads MPLSYQHFRR…FCGSPYSWEQ (177 aa). Residues 178–335 are spacer; it reads KLQHGAESFH…YCLSHIVNLL (158 aa). Disordered regions lie at residues 186 to 229 and 275 to 305; these read FHQQ…QGRS and YPTV…RSQS. The interval 336–679 is polymerase/reverse transcriptase domain (RT); sequence EDWGPCTEHG…YMNLYPVARQ (344 aa). Residues 346-589 enclose the Reverse transcriptase domain; the sequence is EHHIRIPRTP…YSLHFMGYVI (244 aa). Aspartate 418, aspartate 540, and aspartate 541 together coordinate Mg(2+).

This sequence belongs to the hepadnaviridae P protein family.

The enzyme catalyses DNA(n) + a 2'-deoxyribonucleoside 5'-triphosphate = DNA(n+1) + diphosphate. It carries out the reaction Endonucleolytic cleavage to 5'-phosphomonoester.. Its activity is regulated as follows. Activated by host HSP70 and HSP40 in vitro to be able to bind the epsilon loop of the pgRNA. Because deletion of the RNase H region renders the protein partly chaperone-independent, the chaperones may be needed indirectly to relieve occlusion of the RNA-binding site by this domain. Inhibited by several reverse-transcriptase inhibitors: Lamivudine, Adefovir and Entecavir. In terms of biological role, multifunctional enzyme that converts the viral RNA genome into dsDNA in viral cytoplasmic capsids. This enzyme displays a DNA polymerase activity that can copy either DNA or RNA templates, and a ribonuclease H (RNase H) activity that cleaves the RNA strand of RNA-DNA heteroduplexes in a partially processive 3'- to 5'-endonucleasic mode. Neo-synthesized pregenomic RNA (pgRNA) are encapsidated together with the P protein, and reverse-transcribed inside the nucleocapsid. Initiation of reverse-transcription occurs first by binding the epsilon loop on the pgRNA genome, and is initiated by protein priming, thereby the 5'-end of (-)DNA is covalently linked to P protein. Partial (+)DNA is synthesized from the (-)DNA template and generates the relaxed circular DNA (RC-DNA) genome. After budding and infection, the RC-DNA migrates in the nucleus, and is converted into a plasmid-like covalently closed circular DNA (cccDNA). The activity of P protein does not seem to be necessary for cccDNA generation, and is presumably released from (+)DNA by host nuclear DNA repair machinery. The protein is Protein P of Homo sapiens (Human).